Here is a 398-residue protein sequence, read N- to C-terminus: Ubiquitin-like modifier-activating enzyme 5 (398 aa).

Positions 79, 100, 123, 146, and 180 each coordinate ATP. Zn(2+) is bound by residues cysteine 222 and cysteine 225. Cysteine 246 (glycyl thioester intermediate) is an active-site residue. Residues cysteine 299 and cysteine 304 each coordinate Zn(2+). A UFM1-interacting sequence (UIS) motif is present at residues 330–342 (VVHEDNEWGIELV). Residues 343-373 (SEVTEAELQDASGPIPDLPEGITVAYTIPEK) are linker. A UFC1-binding sequence (UFC) motif is present at residues 383–398 (ETEQSLEELMAQMKKI).

Belongs to the ubiquitin-activating E1 family. UBA5 subfamily. As to quaternary structure, homodimer; homodimerization is required for ufm1 activation. Interacts (via UIS motif) with ufm1; binds ufm1 via a trans-binding mechanism in which ufm1 interacts with distinct sites in both subunits of the uba5 homodimer. Interacts (via C-terminus) with ufc1.

It is found in the cytoplasm. The protein resides in the nucleus. Its subcellular location is the endoplasmic reticulum membrane. The protein localises to the golgi apparatus. Functionally, E1-like enzyme which specifically catalyzes the first step in ufmylation. Activates ufm1 by first adenylating its C-terminal glycine residue with ATP, and thereafter linking this residue to the side chain of a cysteine residue in E1, yielding a ufm1-E1 thioester and free AMP. Activates ufm1 via a trans-binding mechanism, in which ufm1 interacts with distinct sites in both subunits of the uba5 homodimer. Trans-binding also promotes stabilization of the uba5 homodimer, and enhances ATP-binding. Transfer of ufm1 from uba5 to the E2-like enzyme UFC1 also takes place using a trans mechanism. Ufmylation plays a key role in various processes, such as ribosome recycling, response to DNA damage, interferon response or reticulophagy (also called ER-phagy). The chain is Ubiquitin-like modifier-activating enzyme 5 from Danio rerio (Zebrafish).